The following is a 409-amino-acid chain: Elongation factor Tu (409 aa).

A tr-type G domain is found at 10–214 (KPHVNVGTIG…AVDSYIPTPE (205 aa)). The tract at residues 19–26 (GHVDHGKT) is G1. 19-26 (GHVDHGKT) lines the GTP pocket. Threonine 26 serves as a coordination point for Mg(2+). The interval 60 to 64 (GITIN) is G2. The interval 81–84 (DCPG) is G3. GTP is bound by residues 81–85 (DCPGH) and 136–139 (NKVD). The segment at 136-139 (NKVD) is G4. The tract at residues 174 to 176 (SAL) is G5.

The protein belongs to the TRAFAC class translation factor GTPase superfamily. Classic translation factor GTPase family. EF-Tu/EF-1A subfamily. Monomer.

It is found in the cytoplasm. It catalyses the reaction GTP + H2O = GDP + phosphate + H(+). Functionally, GTP hydrolase that promotes the GTP-dependent binding of aminoacyl-tRNA to the A-site of ribosomes during protein biosynthesis. This is Elongation factor Tu from Synechococcus sp. (strain JA-3-3Ab) (Cyanobacteria bacterium Yellowstone A-Prime).